Here is a 231-residue protein sequence, read N- to C-terminus: Female protein (231 aa).

A signal peptide spans 1–19 (MDKMLLLLGVSILLSEVFA). The region spanning 24 to 223 (TGKVFVFPRE…YAVIRPRCVA (200 aa)) is the Pentraxin (PTX) domain. Residue Asn-51 is glycosylated (N-linked (GlcNAc...) asparagine). Cys-55 and Cys-114 are joined by a disulfide. 6 residues coordinate Ca(2+): Asp-77, Asn-78, Glu-155, Gln-156, Asp-157, and Gln-167.

It belongs to the pentraxin family. Homopentamer. Pentraxin (or pentaxin) have a discoid arrangement of 5 non-covalently bound subunits. The cofactor is Ca(2+).

The protein localises to the secreted. This Nothocricetulus migratorius (Gray dwarf hamster) protein is Female protein.